The primary structure comprises 229 residues: 2,3-bisphosphoglycerate-dependent phosphoglycerate mutase (229 aa).

Residues Arg7–Asn14, Thr20–Gly21, Arg59, Glu86–Tyr89, Lys97, Arg113–Arg114, and Gly182–Asn183 contribute to the substrate site. His8 (tele-phosphohistidine intermediate) is an active-site residue. Catalysis depends on Glu86, which acts as the Proton donor/acceptor.

Belongs to the phosphoglycerate mutase family. BPG-dependent PGAM subfamily.

The catalysed reaction is (2R)-2-phosphoglycerate = (2R)-3-phosphoglycerate. Its pathway is carbohydrate degradation; glycolysis; pyruvate from D-glyceraldehyde 3-phosphate: step 3/5. Its function is as follows. Catalyzes the interconversion of 2-phosphoglycerate and 3-phosphoglycerate. The chain is 2,3-bisphosphoglycerate-dependent phosphoglycerate mutase from Listeria monocytogenes serotype 4a (strain HCC23).